The primary structure comprises 503 residues: Glycerol kinase (503 aa).

Thr-12 is a binding site for ADP. Residues Thr-12, Thr-13, and Ser-14 each contribute to the ATP site. A sn-glycerol 3-phosphate-binding site is contributed by Thr-12. Position 16 (Arg-16) interacts with ADP. Sn-glycerol 3-phosphate is bound by residues Arg-82, Glu-83, Tyr-134, and Asp-243. The glycerol site is built by Arg-82, Glu-83, Tyr-134, Asp-243, and Gln-244. ADP contacts are provided by Thr-265 and Gly-308. 4 residues coordinate ATP: Thr-265, Gly-308, Gln-312, and Gly-412. ADP is bound at residue Gly-412.

This sequence belongs to the FGGY kinase family.

It catalyses the reaction glycerol + ATP = sn-glycerol 3-phosphate + ADP + H(+). It functions in the pathway polyol metabolism; glycerol degradation via glycerol kinase pathway; sn-glycerol 3-phosphate from glycerol: step 1/1. Inhibited by fructose 1,6-bisphosphate (FBP). Functionally, key enzyme in the regulation of glycerol uptake and metabolism. Catalyzes the phosphorylation of glycerol to yield sn-glycerol 3-phosphate. The protein is Glycerol kinase of Nitrobacter hamburgensis (strain DSM 10229 / NCIMB 13809 / X14).